The following is a 92-amino-acid chain: Probable Fe(2+)-trafficking protein (92 aa).

It belongs to the Fe(2+)-trafficking protein family.

In terms of biological role, could be a mediator in iron transactions between iron acquisition and iron-requiring processes, such as synthesis and/or repair of Fe-S clusters in biosynthetic enzymes. The polypeptide is Probable Fe(2+)-trafficking protein (Shewanella baltica (strain OS223)).